The primary structure comprises 400 residues: Clotting factor B (400 aa).

The first 23 residues, 1–23 (MTWICVITLFALASATLGNKVSR), serve as a signal peptide directing secretion. The Clip domain occupies 36–80 (ECTARGGLKGSCKSLIDCPSVLATLKDSFPVVCSWNGRFQPIVCC). 3 disulfide bridges follow: Cys37–Cys79, Cys47–Cys68, and Cys53–Cys80. Positions 104–124 (LPRLHISGCGKRKVKIDITTV) are cleaved as a propeptide — activation peptide. An N-linked (GlcNAc...) asparagine glycan is attached at Asn140. Residues 148-392 (IAGGVEAKIG…YLDWIAKVTN (245 aa)) enclose the Peptidase S1 domain. Residues His192 and Asp240 each act as charge relay system in the active site. The N-linked (GlcNAc...) asparagine glycan is linked to Asn251. 2 cysteine pairs are disulfide-bonded: Cys307–Cys329 and Cys340–Cys368. The active-site Charge relay system is the Ser344. A glycan (N-linked (GlcNAc...) asparagine) is linked at Asn352.

It belongs to the peptidase S1 family. CLIP subfamily. As to quaternary structure, upon activation by factor C, it is converted to a two-chain active form composed of a light and a heavy chain linked by a disulfide bond.

It is found in the secreted. The catalysed reaction is Selective cleavage of 98-Arg-|-Ile-99 bond in Limulus proclotting enzyme to form active clotting enzyme.. Its activity is regulated as follows. Strongly inhibited by alpha2-plasmin inhibitor and DFP. Partially inhibited by benzamidine, leupeptin and PCMB. Its function is as follows. This enzyme is closely associated with an endotoxin-sensitive hemolymph coagulation system which may play important roles in both hemostasis and host defense mechanisms. Its active form catalyzes the activation of proclotting enzyme. Does not activate the mammalian coagulation factors factor IX, factor X, prothrombin, plasminogen, protein C or prekallikrein. Does not hydrolyze fibrinogen. Does not catalyze the activation of factor C or coagulogen. The polypeptide is Clotting factor B (Tachypleus tridentatus (Japanese horseshoe crab)).